The chain runs to 384 residues: 1-deoxy-D-xylulose 5-phosphate reductoisomerase (384 aa).

NADPH-binding residues include Thr-10, Gly-11, Ser-12, Ile-13, Gly-36, and Asn-122. Lys-123 is a 1-deoxy-D-xylulose 5-phosphate binding site. Glu-124 serves as a coordination point for NADPH. Residue Asp-148 participates in Mn(2+) binding. The 1-deoxy-D-xylulose 5-phosphate site is built by Ser-149, Glu-150, Ser-174, and His-197. Glu-150 lines the Mn(2+) pocket. NADPH is bound at residue Gly-203. 1-deoxy-D-xylulose 5-phosphate is bound by residues Ser-210, Asn-215, Lys-216, and Glu-219. A Mn(2+)-binding site is contributed by Glu-219.

It belongs to the DXR family. The cofactor is Mg(2+). Mn(2+) is required as a cofactor.

The catalysed reaction is 2-C-methyl-D-erythritol 4-phosphate + NADP(+) = 1-deoxy-D-xylulose 5-phosphate + NADPH + H(+). The protein operates within isoprenoid biosynthesis; isopentenyl diphosphate biosynthesis via DXP pathway; isopentenyl diphosphate from 1-deoxy-D-xylulose 5-phosphate: step 1/6. Catalyzes the NADPH-dependent rearrangement and reduction of 1-deoxy-D-xylulose-5-phosphate (DXP) to 2-C-methyl-D-erythritol 4-phosphate (MEP). This is 1-deoxy-D-xylulose 5-phosphate reductoisomerase from Chlorobium phaeobacteroides (strain DSM 266 / SMG 266 / 2430).